Here is a 234-residue protein sequence, read N- to C-terminus: MSRRYWNIDLEEMMEARVHLGHKTRKWNPKMAPYIFTERKDTHIINLAKTARSLSEACDLLFDIAGRGKQFLIVGTKYQATDLVASAATEARCHYVNRKWLGGMLTNWSTTETRLQKFKDLKKEQDTGRFNQLPKKEAAMLKRQLDQLQKYLGGIRYMTSLPDIAIITNQREESIALGECRTLGIPTICLVDTDCDPDLVDIPIPANDDGIASIQLILNRLTSAICEGRALRSL.

It belongs to the universal ribosomal protein uS2 family.

The protein resides in the plastid. The protein localises to the chloroplast. This Pinus thunbergii (Japanese black pine) protein is Small ribosomal subunit protein uS2c (rps2).